The primary structure comprises 256 residues: Imidazole glycerol phosphate synthase subunit HisF (256 aa).

Residues aspartate 11 and aspartate 130 contribute to the active site.

It belongs to the HisA/HisF family. Heterodimer of HisH and HisF.

It localises to the cytoplasm. The enzyme catalyses 5-[(5-phospho-1-deoxy-D-ribulos-1-ylimino)methylamino]-1-(5-phospho-beta-D-ribosyl)imidazole-4-carboxamide + L-glutamine = D-erythro-1-(imidazol-4-yl)glycerol 3-phosphate + 5-amino-1-(5-phospho-beta-D-ribosyl)imidazole-4-carboxamide + L-glutamate + H(+). It functions in the pathway amino-acid biosynthesis; L-histidine biosynthesis; L-histidine from 5-phospho-alpha-D-ribose 1-diphosphate: step 5/9. In terms of biological role, IGPS catalyzes the conversion of PRFAR and glutamine to IGP, AICAR and glutamate. The HisF subunit catalyzes the cyclization activity that produces IGP and AICAR from PRFAR using the ammonia provided by the HisH subunit. This Prochlorococcus marinus (strain NATL1A) protein is Imidazole glycerol phosphate synthase subunit HisF.